A 505-amino-acid polypeptide reads, in one-letter code: Pleckstrin homology domain-containing family D member 1 (505 aa).

The region spanning 28–136 is the PH domain; it reads KVQLYGVLWK…WLEMLQESGK (109 aa). The stretch at 146 to 391 forms a coiled coil; it reads EAMIKSLEAQ…KVRNKEKEER (246 aa). Positions 264 to 284 are disordered; it reads DKNQPQPLTNQSEQPPASDGL. Positions 267–278 are enriched in polar residues; it reads QPQPLTNQSEQP. Position 502 is an omega-N-methylarginine (Arg502).

This sequence belongs to the PLEKHD1 family.

The protein is Pleckstrin homology domain-containing family D member 1 (Plekhd1) of Mus musculus (Mouse).